The primary structure comprises 312 residues: MKVAVLGAAGGIGQALALLLKTQLPSGSELSLYDIAPVTPGVAVDLSHIPTAVKIKGFSGEDATPALEGANVVLISAGVARKPGMDRSDLFNVNAGIVKNLVQQVAKTCPKACIGIITNPVNTTVAIAAEVLKKAGVYDKNKLFGVTTLDIIRSNTFVAELKGKQPGEVEVPVIGGHSGVTILPLLSQVPGVSFTEQEVADLTKRIQNAGTEVVEAKAGGGSATLSMGQAAARFGLSLVRALQGEQGVVECAYVEGDGQYARFFSQPLLLGKNGVEERKSIGTLSAFEKNALEGMLDTLKKDIALGEEFVNK.

NAD(+) contacts are provided by residues 7-13 (GAAGGIG) and Asp34. Residues Arg81 and Arg87 each coordinate substrate. Residues Asn94 and 117 to 119 (ITN) each bind NAD(+). 2 residues coordinate substrate: Asn119 and Arg153. The active-site Proton acceptor is the His177. NAD(+) is bound at residue Met227.

The protein belongs to the LDH/MDH superfamily. MDH type 1 family. As to quaternary structure, homodimer.

It carries out the reaction (S)-malate + NAD(+) = oxaloacetate + NADH + H(+). Functionally, catalyzes the reversible oxidation of malate to oxaloacetate. The sequence is that of Malate dehydrogenase from Escherichia coli O17:K52:H18 (strain UMN026 / ExPEC).